A 1178-amino-acid chain; its full sequence is Thrombospondin-2 (1178 aa).

Residues 1–22 form the signal peptide; the sequence is MLQRSRLLWLAVFITLWVSSDA. Residues 25–221 enclose the Laminin G-like domain; that stretch reads DAKEEENTFD…LQNIHLIFDT (197 aa). Asn-157, Asn-244, Asn-317, and Asn-322 each carry an N-linked (GlcNAc...) asparagine glycan. One can recognise a VWFC domain in the interval 324–381; that stretch reads SVCWQDGRVFADSESWIVDSCTKCTCQDSKIVCHQITCPPVSCADPSFIEGECCPVCS. TSP type-1 domains are found at residues 387–437, 443–498, and 500–555; these read EEGW…KKCD, DGGW…APCP, and NGQW…RDCP. Intrachain disulfides connect Cys-399/Cys-431, Cys-403/Cys-436, Cys-414/Cys-421, Cys-455/Cys-492, Cys-459/Cys-497, Cys-470/Cys-482, Cys-512/Cys-549, Cys-516/Cys-554, Cys-527/Cys-539, Cys-559/Cys-570, Cys-564/Cys-580, Cys-583/Cys-594, Cys-600/Cys-616, Cys-607/Cys-625, Cys-628/Cys-652, Cys-658/Cys-671, Cys-665/Cys-684, Cys-686/Cys-697, Cys-713/Cys-721, Cys-726/Cys-746, Cys-762/Cys-782, Cys-785/Cys-805, Cys-821/Cys-841, Cys-844/Cys-864, Cys-882/Cys-902, Cys-918/Cys-938, and Cys-954/Cys-1175. N-linked (GlcNAc...) asparagine glycosylation occurs at Asn-463. Positions 555 to 595 constitute an EGF-like 1 domain; it reads PIDGCLSNPCFPGAECNSYPDGSWSCGPCPAGFLGNGTVCE. An N-linked (GlcNAc...) asparagine glycan is attached at Asn-590. The EGF-like 2 domain occupies 654-698; it reads PENPCKDKTHSCHKSAECIYLGHFSDPMYKCECRTGYAGDGRICG. 8 TSP type-3 repeats span residues 699–734, 735–770, 771–793, 794–829, 830–852, 853–890, 891–926, and 927–962; these read EDSDLDGWPNNNLVCAANATYHCVKDNCPLLPNSGQ, EDFDKDGKGDACDEDDDNDGVEDDKDNCPLLFNPRQ, FDYDKDEVGDRCDNCPYVHNPAQ, IDTDNNGEGDSCAVDIDGDDIFNERDNCPYVYNTDQ, SDTDGDGVGDQCDNCPLMHNPDQ, TDADNDLVGDQCDNNEDIDEDGHQNNQDNCPYIPNANQ, ADHDKDGKGDACDPDDDNDGIPDDRDNCRLRYNPEQ, and EDSDGDGRGDICKDDFDDDNVPDIFDVCPENNAISE. Asn-716 is a glycosylation site (N-linked (GlcNAc...) asparagine). The tract at residues 737-760 is disordered; the sequence is FDKDGKGDACDEDDDNDGVEDDKD. Positions 746 to 759 are enriched in acidic residues; it reads CDEDDDNDGVEDDK. Positions 852 to 941 are disordered; that stretch reads QTDADNDLVG…DGRGDICKDD (90 aa). Residues 853-872 show a composition bias toward acidic residues; it reads TDADNDLVGDQCDNNEDIDE. Residues 891–901 show a composition bias toward basic and acidic residues; sequence ADHDKDGKGDA. A compositionally biased stretch (acidic residues) spans 902–911; that stretch reads CDPDDDNDGI. 2 stretches are compositionally biased toward basic and acidic residues: residues 912-924 and 931-940; these read PDDRDNCRLRYNP and GDGRGDICKD. A Cell attachment site motif is present at residues 934-936; the sequence is RGD. Residues 966 to 1178 enclose the TSP C-terminal domain; it reads RKFQMVPLDP…SDLKYECRDA (213 aa). N-linked (GlcNAc...) asparagine glycosylation occurs at Asn-1075.

This sequence belongs to the thrombospondin family. As to quaternary structure, homotrimer; disulfide-linked. Can bind to fibrinogen, fibronectin, laminin and type V collagen.

Its function is as follows. Adhesive glycoprotein that mediates cell-to-cell and cell-to-matrix interactions. The sequence is that of Thrombospondin-2 (THBS2) from Gallus gallus (Chicken).